A 465-amino-acid chain; its full sequence is Cysteine--tRNA ligase (465 aa).

Zn(2+) is bound at residue Cys27. The short motif at 29 to 39 (PTVYDDAHLGH) is the 'HIGH' region element. Cys207, His237, and Glu241 together coordinate Zn(2+). The 'KMSKS' region motif lies at 269–273 (KMSKS). ATP is bound at residue Lys272.

The protein belongs to the class-I aminoacyl-tRNA synthetase family. As to quaternary structure, monomer. The cofactor is Zn(2+).

It is found in the cytoplasm. The enzyme catalyses tRNA(Cys) + L-cysteine + ATP = L-cysteinyl-tRNA(Cys) + AMP + diphosphate. The polypeptide is Cysteine--tRNA ligase (Helicobacter pylori (strain G27)).